Consider the following 245-residue polypeptide: MWIGIISLFPEMFKAITEYGVTGRAVRQNLLEIQYWNPRDFTFDKHKTVDDRPYGGGPGMLMMVQPLRDAIHCAKSVAGDGVKVIYLSPQGRKLDQNGVQELARNQKMIFVCGRYEGIDERLIETEIDEEWSIGDYVLTGGELPAMTLIDAVARFVPCVLGKQASAQEDSFAEGLLDCPHYTRPEQLNGLTVPPVLMSGNHEEIRKWRLKQSLQRTWLRRPELLESLALTDEQSKLLSQIKQENS.

Residues G113 and 133–138 (IGDYVL) each bind S-adenosyl-L-methionine.

Belongs to the RNA methyltransferase TrmD family. In terms of assembly, homodimer.

The protein localises to the cytoplasm. The enzyme catalyses guanosine(37) in tRNA + S-adenosyl-L-methionine = N(1)-methylguanosine(37) in tRNA + S-adenosyl-L-homocysteine + H(+). Specifically methylates guanosine-37 in various tRNAs. In Histophilus somni (strain 129Pt) (Haemophilus somnus), this protein is tRNA (guanine-N(1)-)-methyltransferase.